Reading from the N-terminus, the 680-residue chain is uncharacterized protein (680 aa).

Belongs to the HyuA family.

This is an uncharacterized protein from Methanocaldococcus jannaschii (strain ATCC 43067 / DSM 2661 / JAL-1 / JCM 10045 / NBRC 100440) (Methanococcus jannaschii).